The chain runs to 90 residues: Small ribosomal subunit protein bS6 (90 aa).

K33 participates in a covalent cross-link: Isoglutamyl lysine isopeptide (Lys-Gln) (interchain with Q-Cter in protein Pup).

This sequence belongs to the bacterial ribosomal protein bS6 family.

Functionally, binds together with bS18 to 16S ribosomal RNA. This chain is Small ribosomal subunit protein bS6 (rpsF), found in Mycolicibacterium smegmatis (strain ATCC 700084 / mc(2)155) (Mycobacterium smegmatis).